A 391-amino-acid polypeptide reads, in one-letter code: 3-ketoacyl-CoA thiolase, peroxisomal (391 aa).

Cysteine 92 (acyl-thioester intermediate) is an active-site residue. Catalysis depends on proton acceptor residues histidine 335 and cysteine 366.

It belongs to the thiolase-like superfamily. Thiolase family. As to quaternary structure, homodimer.

It is found in the peroxisome. The catalysed reaction is an acyl-CoA + acetyl-CoA = a 3-oxoacyl-CoA + CoA. The protein operates within lipid metabolism; fatty acid metabolism. In Encephalitozoon cuniculi (strain GB-M1) (Microsporidian parasite), this protein is 3-ketoacyl-CoA thiolase, peroxisomal (FOX3).